The primary structure comprises 406 residues: Probable mannan endo-1,4-beta-mannosidase C (406 aa).

An N-terminal signal peptide occupies residues 1 to 20; sequence MLINFEKVLSLALLAGSVSG. N-linked (GlcNAc...) asparagine glycosylation is present at N58. Position 80 (W80) interacts with substrate. N-linked (GlcNAc...) asparagine glycans are attached at residues N86 and N114. A substrate-binding site is contributed by N201. The active-site Proton donor is E202. Y287 contacts substrate. The active-site Nucleophile is the E320. N-linked (GlcNAc...) asparagine glycosylation is present at N338. A substrate-binding site is contributed by W362.

It belongs to the glycosyl hydrolase 5 (cellulase A) family.

The protein resides in the secreted. The catalysed reaction is Random hydrolysis of (1-&gt;4)-beta-D-mannosidic linkages in mannans, galactomannans and glucomannans.. Functionally, endo-1,4-mannanase, a crucial enzyme for depolymerization of seed galactomannans and wood galactoglucomannans. This Aspergillus terreus (strain NIH 2624 / FGSC A1156) protein is Probable mannan endo-1,4-beta-mannosidase C (manC).